We begin with the raw amino-acid sequence, 333 residues long: Protein APEM9 (333 aa).

Residues M1 to A90 lie on the Cytoplasmic side of the membrane. The helical transmembrane segment at A91–C102 threads the bilayer. The Peroxisomal portion of the chain corresponds to L103 to S268. A helical transmembrane segment spans residues R269–L285. The Cytoplasmic segment spans residues K286–T333.

In terms of assembly, interacts with PEX6 and PEX19-1, but not with PEX1. Interacts (via N-terminus) with PEX13, and (via N-terminus and C-terminus) with PEX16. As to expression, expressed in roots, leaves, stems, flowers, buds and fruits.

The protein localises to the peroxisome membrane. In terms of biological role, involved in peroxisome biogenesis and matrix protein import. Required for pollen maturation and in vivo germination via its role in peroxisomal function, which partially involves jasmonic acid biosynthesis. Transported to peroxisomes via the interaction with PEX19-1. Required for peroxisomal protein import by acting as an anchoring protein for the AAA ATPase complex, which consists of PEX1 and PEX6. This Arabidopsis thaliana (Mouse-ear cress) protein is Protein APEM9.